The following is a 691-amino-acid chain: POU domain, class 6, transcription factor 2 (691 aa).

Basic and acidic residues predominate over residues 25-36; sequence MNAELRGEDKAA. Disordered regions lie at residues 25-93, 186-297, and 435-461; these read MNAE…PVGP, LQQQ…LQLV, and SQAS…SALS. Positions 186 to 195 are enriched in low complexity; it reads LQQQQQQQQQ. The span at 196-210 shows a compositional bias: pro residues; that stretch reads QPPPSTNQHPQPAPQ. Low complexity predominate over residues 211–220; sequence APSQSQQQPL. Pro residues predominate over residues 221-238; the sequence is QPTPPQQPPPASQQPPAP. Composition is skewed to low complexity over residues 239-280 and 438-461; these read TSQL…SQSP and SMSQ…SALS. Residues 476-586 enclose the POU-specific domain; sequence VDGVNLEEIR…VLERWMAEAE (111 aa). The segment at residues 607–666 is a DNA-binding region (homeobox); the sequence is KRKRRTSFTPQALEILNAHFEKNTHPSGQEMTEIAEKLNYDREVVRVWFCNKRQALKNTI.

Belongs to the POU transcription factor family. Class-6 subfamily. Expressed only within the CNS, where its expression is restricted to the medical habenulla, to a dispersed population of neurons in the dorsal hypothalamus, and to subsets of ganglion and amacrine cells in the retina.

It is found in the nucleus. In terms of biological role, probable transcription factor likely to be involved in early steps in the differentiation of amacrine and ganglion cells. Recognizes and binds to the DNA sequence 5'-ATGCAAAT-3'. Isoform 1 does not bind DNA. In Homo sapiens (Human), this protein is POU domain, class 6, transcription factor 2 (POU6F2).